A 480-amino-acid polypeptide reads, in one-letter code: Chromosomal replication initiator protein DnaA (480 aa).

Positions 1–71 (MRHDALFERV…TTLVQQEDSE (71 aa)) are domain I, interacts with DnaA modulators. The interval 71–137 (EILKVEILVR…RPVQAPLFGS (67 aa)) is domain II. The segment at 138–360 (PLDQRYGFDS…GAFNQLLFRR (223 aa)) is domain III, AAA+ region. G184, G186, K187, and T188 together coordinate ATP. The segment at 361–480 (SFEPQLSIER…IELLKRLINE (120 aa)) is domain IV, binds dsDNA.

Belongs to the DnaA family. Oligomerizes as a right-handed, spiral filament on DNA at oriC.

The protein resides in the cytoplasm. Its function is as follows. Plays an essential role in the initiation and regulation of chromosomal replication. ATP-DnaA binds to the origin of replication (oriC) to initiate formation of the DNA replication initiation complex once per cell cycle. Binds the DnaA box (a 9 base pair repeat at the origin) and separates the double-stranded (ds)DNA. Forms a right-handed helical filament on oriC DNA; dsDNA binds to the exterior of the filament while single-stranded (ss)DNA is stabiized in the filament's interior. The ATP-DnaA-oriC complex binds and stabilizes one strand of the AT-rich DNA unwinding element (DUE), permitting loading of DNA polymerase. After initiation quickly degrades to an ADP-DnaA complex that is not apt for DNA replication. Binds acidic phospholipids. The chain is Chromosomal replication initiator protein DnaA from Rhizobium meliloti (strain 1021) (Ensifer meliloti).